The primary structure comprises 211 residues: Thymidylate kinase (211 aa).

11–18 contributes to the ATP binding site; the sequence is GPDGAGKT.

Belongs to the thymidylate kinase family.

It catalyses the reaction dTMP + ATP = dTDP + ADP. Phosphorylation of dTMP to form dTDP in both de novo and salvage pathways of dTTP synthesis. This Streptococcus pyogenes serotype M1 protein is Thymidylate kinase.